The chain runs to 549 residues: Adhesion G protein-coupled receptor G3 (549 aa).

The N-terminal stretch at 1 to 20 is a signal peptide; that stretch reads MATPRGLGALLLLLLLPTSG. Residues 21–270 are Extracellular-facing; it reads QEKPTEGPRN…DQSTVHILTR (250 aa). Residues Asn-98, Asn-144, and Asn-210 are each glycosylated (N-linked (GlcNAc...) asparagine). One can recognise a GAIN-B domain in the interval 107–262; sequence FYFSLEPSQV…ALLLRPTLDQ (156 aa). Disulfide bonds link Cys-215-Cys-244 and Cys-233-Cys-246. A GPS region spans residues 215–262; that stretch reads CVFWDVTKGTTGDWSSEGCSTEVRPEGTVCCCDHLTFFALLLRPTLDQ. The interval 251 to 259 is stachel; sequence FFALLLRPT. A helical membrane pass occupies residues 271-295; sequence ISQAGCGVSMIFLAFTIILYAFLRL. At 296–304 the chain is on the cytoplasmic side; sequence SRERFKSED. The helical transmembrane segment at 305–326 threads the bilayer; the sequence is APKIHVALGGSLFLLNLAFLVN. Residues 327-338 lie on the Extracellular side of the membrane; that stretch reads VGSGSKGSDAAC. Cys-338 and Cys-420 are joined by a disulfide. A helical membrane pass occupies residues 339–364; it reads WARGAVFHYFLLCAFTWMGLEAFHLY. Topologically, residues 365–378 are cytoplasmic; sequence LLAVRVFNTYFGHY. A helical membrane pass occupies residues 379 to 400; that stretch reads FLKLSLVGWGLPALMVIGTGSA. Residues 401–428 lie on the Extracellular side of the membrane; that stretch reads NSYGLYTIRDRENRTSLELCWFREGTTM. Asn-413 carries an N-linked (GlcNAc...) asparagine glycan. A helical membrane pass occupies residues 429–454; it reads YALYITVHGYFLITFLFGMVVLALVV. Residues 455-474 are Cytoplasmic-facing; the sequence is WKIFTLSRATAVKERGKNRK. The helical transmembrane segment at 475–495 threads the bilayer; sequence KVLTLLGLSSLVGVTWGLAIF. At 496-501 the chain is on the extracellular side; that stretch reads TPLGLS. A helical membrane pass occupies residues 502-525; it reads TVYIFALFNSLQGVFICCWFTILY. Residue Asn-510 coordinates cortisol. Over 526-549 the chain is Cytoplasmic; the sequence is LPSQSTTVSSSTARLDQAHSASQE.

It belongs to the G-protein coupled receptor 2 family. Adhesion G-protein coupled receptor (ADGR) subfamily. As to quaternary structure, heterodimer of 2 chains generated by proteolytic processing; the large extracellular N-terminal fragment and the membrane-bound C-terminal fragment predominantly remain associated and non-covalently linked. Interacts with PRTN3; this interaction induces the activation of PAR2. Interacts with GNAO1 (when palmitoylated). In terms of processing, autoproteolytically processed at the GPS region of the GAIN-B domain; this cleavage modulates receptor activity. O- and N-glycosylated. Expressed in cultured primary dermal lymphatic endothelial cells. Highly expressed in polymorphonuclear cells (PMNs) including neutrophilic, eosinophilic, and basophilic granulocytes.

Its subcellular location is the cell membrane. Its activity is regulated as follows. Forms a heterodimer of 2 chains generated by proteolytic processing that remain associated through non-covalent interactions mediated by the GAIN-B domain. In the inactivated receptor, the Stachel sequence (also named stalk) is embedded in the GAIN-B domain, where it adopts a beta-strand conformation. On activation, the Stachel moves into the 7 transmembrane region and adopts a twisted hook-shaped configuration that forms contacts within the receptor, leading to coupling of a G-alpha protein, which activates signaling. The cleaved GAIN-B and N-terminal domains can then dissociate from the rest of the receptor. Adhesion G-protein coupled receptor (aGPCR) for glucocorticoid hormones such as cortisol, cortisone and 11-deoxycortisol. Ligand binding causes a conformation change that triggers signaling via guanine nucleotide-binding proteins (G proteins) and modulates the activity of downstream effectors, such as adenylate cyclase. ADGRG3/GPR97 is coupled to G(o)/GNAO1 G proteins and mediates signaling by inhibiting adenylate cyclase activity. May also signal through G-alpha(q)-proteins; additional evidence are however required to confirm this result in vivo. Plays a role in the regulation of various processes including B-cell development, inflammation or innate immunity. Regulates migration of lymphatic endothelial cells in vitro via the small GTPases RhoA and CDC42. Antibody ligation leads to the production and activation of antimicrobial mediators like reactive oxygen species (ROS) and myeloperoxidase (MPO) as well as enhanced bacteria uptake and killing by granulocytes. Additionally, collaborates with protease-activated receptor 2/PAR2 to stimulate neutrophil-driven antimicrobial responses and endothelial cell activation. This chain is Adhesion G protein-coupled receptor G3, found in Homo sapiens (Human).